The primary structure comprises 124 residues: Small ribosomal subunit protein uS12 (124 aa).

Aspartate 89 carries the 3-methylthioaspartic acid modification. The interval 105-124 is disordered; sequence TGVDSRMQGRSKYGTKKPKK.

It belongs to the universal ribosomal protein uS12 family. As to quaternary structure, part of the 30S ribosomal subunit. Contacts proteins S8 and S17. May interact with IF1 in the 30S initiation complex.

With S4 and S5 plays an important role in translational accuracy. In terms of biological role, interacts with and stabilizes bases of the 16S rRNA that are involved in tRNA selection in the A site and with the mRNA backbone. Located at the interface of the 30S and 50S subunits, it traverses the body of the 30S subunit contacting proteins on the other side and probably holding the rRNA structure together. The combined cluster of proteins S8, S12 and S17 appears to hold together the shoulder and platform of the 30S subunit. The protein is Small ribosomal subunit protein uS12 of Vesicomyosocius okutanii subsp. Calyptogena okutanii (strain HA).